Here is a 224-residue protein sequence, read N- to C-terminus: Cytidylate kinase (224 aa).

11–19 (GPAAAGKST) is a binding site for ATP.

Belongs to the cytidylate kinase family. Type 1 subfamily.

It is found in the cytoplasm. The enzyme catalyses CMP + ATP = CDP + ADP. The catalysed reaction is dCMP + ATP = dCDP + ADP. This Listeria welshimeri serovar 6b (strain ATCC 35897 / DSM 20650 / CCUG 15529 / CIP 8149 / NCTC 11857 / SLCC 5334 / V8) protein is Cytidylate kinase.